The following is a 92-amino-acid chain: MTRSLKKNPFVVDHLSGKIEKLNMREEKEIIVTWSRGSTIIPAMMGHTIAIHNGKEHFPIYITDQMVGHKLGEFSPTLTFARHTRNDNKSRR.

Belongs to the universal ribosomal protein uS19 family.

It is found in the plastid. The protein localises to the chloroplast. In terms of biological role, protein S19 forms a complex with S13 that binds strongly to the 16S ribosomal RNA. The sequence is that of Small ribosomal subunit protein uS19c from Dioscorea elephantipes (Elephant's foot yam).